A 95-amino-acid polypeptide reads, in one-letter code: Aspartyl/glutamyl-tRNA(Asn/Gln) amidotransferase subunit C (95 aa).

Belongs to the GatC family. In terms of assembly, heterotrimer of A, B and C subunits.

The enzyme catalyses L-glutamyl-tRNA(Gln) + L-glutamine + ATP + H2O = L-glutaminyl-tRNA(Gln) + L-glutamate + ADP + phosphate + H(+). It carries out the reaction L-aspartyl-tRNA(Asn) + L-glutamine + ATP + H2O = L-asparaginyl-tRNA(Asn) + L-glutamate + ADP + phosphate + 2 H(+). Allows the formation of correctly charged Asn-tRNA(Asn) or Gln-tRNA(Gln) through the transamidation of misacylated Asp-tRNA(Asn) or Glu-tRNA(Gln) in organisms which lack either or both of asparaginyl-tRNA or glutaminyl-tRNA synthetases. The reaction takes place in the presence of glutamine and ATP through an activated phospho-Asp-tRNA(Asn) or phospho-Glu-tRNA(Gln). This is Aspartyl/glutamyl-tRNA(Asn/Gln) amidotransferase subunit C from Geotalea daltonii (strain DSM 22248 / JCM 15807 / FRC-32) (Geobacter daltonii).